The chain runs to 452 residues: Keratin, type II cytoskeletal 80 (452 aa).

Residues 1–82 form a head region; the sequence is MAYRSCVVGF…DPAVQQQKNQ (82 aa). Phosphoserine is present on Ser-45. Residues 82–118 are coil 1A; it reads QEKEEMKVLNDKFASLIGKVQALEQRNQLLETRWGFL. The 312-residue stretch at 83-394 folds into the IF rod domain; that stretch reads EKEEMKVLND…KLMEGEESRM (312 aa). A linker 1 region spans residues 119–135; sequence QGQGSATFDLSHHYETF. Residues 136-227 form a coil 1B region; it reads QGRLQEELRK…TVYEQELKDL (92 aa). Residues 228–251 are linker 12; sequence TAQVKDVSVTVGLDSRCHIDLSGI. The tract at residues 252–390 is coil 2; that stretch reads VEEVKAQYDA…ATYHKLMEGE (139 aa). Residues 391-452 are tail; sequence ESRMDLPSTT…YLSQESEASE (62 aa). Polar residues-rich tracts occupy residues 411–421 and 443–452; these read TTASKSGLSKT and YLSQESEASE. A disordered region spans residues 411–452; that stretch reads TTASKSGLSKTPSRKKKNRGGPVIKITEMSEKYLSQESEASE.

The protein belongs to the intermediate filament family. As to quaternary structure, heterotetramer of two type I and two type II keratins.

The chain is Keratin, type II cytoskeletal 80 (Krt80) from Rattus norvegicus (Rat).